The following is a 160-amino-acid chain: Phosphopantetheine adenylyltransferase (160 aa).

Thr9 contacts substrate. ATP contacts are provided by residues 9-10 (TF) and His17. Substrate-binding residues include Lys41, Leu73, and Arg87. ATP is bound by residues 88 to 90 (GLR), Glu98, and 123 to 129 (YSFISST).

Belongs to the bacterial CoaD family. Homohexamer. Mg(2+) serves as cofactor.

Its subcellular location is the cytoplasm. The catalysed reaction is (R)-4'-phosphopantetheine + ATP + H(+) = 3'-dephospho-CoA + diphosphate. It functions in the pathway cofactor biosynthesis; coenzyme A biosynthesis; CoA from (R)-pantothenate: step 4/5. Functionally, reversibly transfers an adenylyl group from ATP to 4'-phosphopantetheine, yielding dephospho-CoA (dPCoA) and pyrophosphate. The sequence is that of Phosphopantetheine adenylyltransferase from Ectopseudomonas mendocina (strain ymp) (Pseudomonas mendocina).